The sequence spans 345 residues: Tetraacyldisaccharide 4'-kinase (345 aa).

Residue 61 to 68 (TAGGTGKT) coordinates ATP.

The protein belongs to the LpxK family.

It carries out the reaction a lipid A disaccharide + ATP = a lipid IVA + ADP + H(+). It functions in the pathway glycolipid biosynthesis; lipid IV(A) biosynthesis; lipid IV(A) from (3R)-3-hydroxytetradecanoyl-[acyl-carrier-protein] and UDP-N-acetyl-alpha-D-glucosamine: step 6/6. Transfers the gamma-phosphate of ATP to the 4'-position of a tetraacyldisaccharide 1-phosphate intermediate (termed DS-1-P) to form tetraacyldisaccharide 1,4'-bis-phosphate (lipid IVA). The chain is Tetraacyldisaccharide 4'-kinase from Xanthomonas euvesicatoria pv. vesicatoria (strain 85-10) (Xanthomonas campestris pv. vesicatoria).